The chain runs to 64 residues: Putative neurotoxin-G (64 aa).

Residues 1–19 (MFAMVTVTVLLLISSGIFC) form the signal peptide. Disulfide bonds link Cys25–Cys45, Cys32–Cys54, and Cys36–Cys56.

In terms of tissue distribution, expressed by the venom gland.

Its subcellular location is the secreted. The polypeptide is Putative neurotoxin-G (Lychas mucronatus (Chinese swimming scorpion)).